The primary structure comprises 461 residues: Serine/threonine-protein kinase 4 homolog A (461 aa).

The 254-residue stretch at 20-273 folds into the Protein kinase domain; that stretch reads FTIVEKLGEG…AEELLKHPFI (254 aa). ATP contacts are provided by residues 26-34 and K49; that span reads LGEGSYGSV. Residue D139 is the Proton acceptor of the active site. Residue T173 is modified to Phosphothreonine; by autocatalysis. Disordered regions lie at residues 303–349 and 369–388; these read GIEQ…EEYD and NDDE…SNKK. Residues 307-322 are compositionally biased toward acidic residues; sequence RDEEEEDEDEDSEDSD. Residues 411-458 enclose the SARAH domain; it reads SDKYSSYSLEELKKMLAELEIEREKEVQKTLEKFSINRQALLAVIDEK.

It belongs to the protein kinase superfamily. STE Ser/Thr protein kinase family. STE20 subfamily. The cofactor is Mn(2+). In terms of processing, undergoes autophosphorylation in the catalytic domain.

It localises to the cytoplasm. The protein resides in the cytosol. The enzyme catalyses L-seryl-[protein] + ATP = O-phospho-L-seryl-[protein] + ADP + H(+). It carries out the reaction L-threonyl-[protein] + ATP = O-phospho-L-threonyl-[protein] + ADP + H(+). Its function is as follows. Regulates both cAMP signaling during early development and the stress response. Functions as an activator of adenylylcyclase. This Dictyostelium discoideum (Social amoeba) protein is Serine/threonine-protein kinase 4 homolog A (krsA).